Consider the following 401-residue polypeptide: E3 ubiquitin-protein ligase NHLRC1 (401 aa).

The RING-type zinc-finger motif lies at 28 to 74 (CKVCFERFGHWQQRRPRNLPCGHVVCLACVAALAHPRTLGLECPFCR). NHL repeat units follow at residues 115 to 159 (TLTC…FDSG), 163 to 206 (AHQF…FDFF), 207 to 247 (GQIK…LEAD), 250 to 303 (EGVL…FNST), 304 to 352 (MQLI…LGKP), and 353 to 396 (EEFP…FKVM).

In terms of assembly, interacts with AGL. Interacts (via the NHL repeats) with EPM2A/laforin. Forms a complex with EPM2A/laforin and HSP70. Interacts with PRDM8.

It is found in the endoplasmic reticulum. The protein localises to the nucleus. The enzyme catalyses S-ubiquitinyl-[E2 ubiquitin-conjugating enzyme]-L-cysteine + [acceptor protein]-L-lysine = [E2 ubiquitin-conjugating enzyme]-L-cysteine + N(6)-ubiquitinyl-[acceptor protein]-L-lysine.. The protein operates within protein modification; protein ubiquitination. Its function is as follows. E3 ubiquitin-protein ligase. Together with the phosphatase EPM2A/laforin, appears to be involved in the clearance of toxic polyglucosan and protein aggregates via multiple pathways. In complex with EPM2A/laforin and HSP70, suppresses the cellular toxicity of misfolded proteins by promoting their degradation through the ubiquitin-proteasome system (UPS). Ubiquitinates the glycogen-targeting protein phosphatase subunits PPP1R3C/PTG and PPP1R3D in a laforin-dependent manner and targets them for proteasome-dependent degradation, thus decreasing glycogen accumulation. Polyubiquitinates EPM2A/laforin and ubiquitinates AGL and targets them for proteasome-dependent degradation. Also promotes proteasome-independent protein degradation through the macroautophagy pathway. In Mus musculus (Mouse), this protein is E3 ubiquitin-protein ligase NHLRC1 (Nhlrc1).